The primary structure comprises 155 residues: Ribosome maturation factor RimP (155 aa).

Belongs to the RimP family.

It localises to the cytoplasm. Its function is as follows. Required for maturation of 30S ribosomal subunits. This Staphylococcus aureus (strain JH9) protein is Ribosome maturation factor RimP.